A 994-amino-acid chain; its full sequence is Pre-mRNA-processing ATP-dependent RNA helicase PRP5 (994 aa).

The span at 1–18 (MTLPSGDSSITNNTNQTL) shows a compositional bias: polar residues. 3 disordered regions span residues 1-105 (MTLP…SLEE), 170-190 (FVNE…EEEF), and 235-275 (SESF…EQEQ). Basic and acidic residues-rich tracts occupy residues 20 to 32 (EDEK…EKLA) and 70 to 79 (TTKRNEKQKV). A coiled-coil region spans residues 20–87 (EDEKRRLRRE…KVENSFAKLN (68 aa)). Residues 84 to 102 (AKLNSTSIDHSSTETQATS) show a composition bias toward polar residues. Over residues 172-181 (NEDKEGGGGK) the composition is skewed to basic and acidic residues. 2 coiled-coil regions span residues 217-284 (VLEE…RYLA) and 310-382 (DDED…GKNV). The span at 235–245 (SESFVDNNNGG) shows a compositional bias: polar residues. The Q motif signature appears at 387-416 (LTWGQLLMPESVMSVIQNDLGFAKPSPIQC). The region spanning 419-597 (IPIVLSGRDM…KKVLHNPIEI (179 aa)) is the Helicase ATP-binding domain. 432-439 (AKTGSGKT) contributes to the ATP binding site. The short motif at 545–548 (DEAD) is the DEAD box element. The region spanning 629-780 (KLEDILSRFF…AVDSKLQEIA (152 aa)) is the Helicase C-terminal domain. The disordered stretch occupies residues 842 to 867 (YFGSSSSSSSFPSSSNTTTTTTTTST). Over residues 845 to 867 (SSSSSSSFPSSSNTTTTTTTTST) the composition is skewed to low complexity.

This sequence belongs to the DEAD box helicase family. DDX46/PRP5 subfamily.

It is found in the nucleus. The catalysed reaction is ATP + H2O = ADP + phosphate + H(+). Functionally, ATP-dependent RNA helicase involved spliceosome assembly and in nuclear splicing. Catalyzes an ATP-dependent conformational change of U2 snRNP. Bridges U1 and U2 snRNPs and enables stable U2 snRNP association with intron RNA. In Lodderomyces elongisporus (strain ATCC 11503 / CBS 2605 / JCM 1781 / NBRC 1676 / NRRL YB-4239) (Yeast), this protein is Pre-mRNA-processing ATP-dependent RNA helicase PRP5 (PRP5).